A 601-amino-acid polypeptide reads, in one-letter code: Probable translation initiation factor IF-2 (601 aa).

Positions 14–229 constitute a tr-type G domain; the sequence is LRTPIVAVLG…VMMGLSQRYM (216 aa). The interval 23–30 is G1; sequence GHVDHGKT. Residue 23 to 30 coordinates GTP; sequence GHVDHGKT. The segment at 48-52 is G2; sequence AITQH. The G3 stretch occupies residues 85-88; the sequence is DTPG. GTP-binding positions include 85 to 89 and 139 to 142; these read DTPGH and NKID. Residues 139–142 form a G4 region; sequence NKID. Residues 207–209 form a G5 region; sequence SAE.

Belongs to the TRAFAC class translation factor GTPase superfamily. Classic translation factor GTPase family. IF-2 subfamily.

Function in general translation initiation by promoting the binding of the formylmethionine-tRNA to ribosomes. Seems to function along with eIF-2. The polypeptide is Probable translation initiation factor IF-2 (Haloarcula marismortui (strain ATCC 43049 / DSM 3752 / JCM 8966 / VKM B-1809) (Halobacterium marismortui)).